Reading from the N-terminus, the 261-residue chain is Cytochrome c oxidase subunit 3 (261 aa).

Residues 1–15 lie on the Mitochondrial matrix side of the membrane; that stretch reads MAHQAHAYHMVDPSP. A helical membrane pass occupies residues 16-34; that stretch reads WPLTGAIAALLMTSGLAIW. At 35–40 the chain is on the mitochondrial intermembrane side; the sequence is FHFHST. A helical membrane pass occupies residues 41-66; that stretch reads TLMTLGLILLLLTMYQWWRDIIREGT. Residues 67-72 lie on the Mitochondrial matrix side of the membrane; the sequence is FQGHHT. A helical transmembrane segment spans residues 73 to 105; the sequence is PPVQKGLRYGMILFITSEVFFFLGFFWAFYHSS. The Mitochondrial intermembrane portion of the chain corresponds to 106–128; it reads LAPTPELGGCWPPTGITPLDPFE. The chain crosses the membrane as a helical span at residues 129–152; it reads VPLLNTAVLLASGVTVTWAHHSIM. Topologically, residues 153 to 155 are mitochondrial matrix; the sequence is EGE. A helical membrane pass occupies residues 156 to 183; that stretch reads RKQAIQSLALTILLGFYFTALQAMEYYE. The Mitochondrial intermembrane portion of the chain corresponds to 184–190; the sequence is APFTIAD. The helical transmembrane segment at 191-223 threads the bilayer; that stretch reads GVYGSTFFVATGFHGLHVIIGSTFLAVCLLRQI. Residues 224–232 are Mitochondrial matrix-facing; it reads QYHFTSEHH. The chain crosses the membrane as a helical span at residues 233 to 256; that stretch reads FGFEAAAWYWHFVDVVWLFLYVSI. The Mitochondrial intermembrane portion of the chain corresponds to 257–261; that stretch reads YWWGS.

It belongs to the cytochrome c oxidase subunit 3 family. In terms of assembly, component of the cytochrome c oxidase (complex IV, CIV), a multisubunit enzyme composed of 14 subunits. The complex is composed of a catalytic core of 3 subunits MT-CO1, MT-CO2 and MT-CO3, encoded in the mitochondrial DNA, and 11 supernumerary subunits COX4I, COX5A, COX5B, COX6A, COX6B, COX6C, COX7A, COX7B, COX7C, COX8 and NDUFA4, which are encoded in the nuclear genome. The complex exists as a monomer or a dimer and forms supercomplexes (SCs) in the inner mitochondrial membrane with NADH-ubiquinone oxidoreductase (complex I, CI) and ubiquinol-cytochrome c oxidoreductase (cytochrome b-c1 complex, complex III, CIII), resulting in different assemblies (supercomplex SCI(1)III(2)IV(1) and megacomplex MCI(2)III(2)IV(2)).

Its subcellular location is the mitochondrion inner membrane. The enzyme catalyses 4 Fe(II)-[cytochrome c] + O2 + 8 H(+)(in) = 4 Fe(III)-[cytochrome c] + 2 H2O + 4 H(+)(out). In terms of biological role, component of the cytochrome c oxidase, the last enzyme in the mitochondrial electron transport chain which drives oxidative phosphorylation. The respiratory chain contains 3 multisubunit complexes succinate dehydrogenase (complex II, CII), ubiquinol-cytochrome c oxidoreductase (cytochrome b-c1 complex, complex III, CIII) and cytochrome c oxidase (complex IV, CIV), that cooperate to transfer electrons derived from NADH and succinate to molecular oxygen, creating an electrochemical gradient over the inner membrane that drives transmembrane transport and the ATP synthase. Cytochrome c oxidase is the component of the respiratory chain that catalyzes the reduction of oxygen to water. Electrons originating from reduced cytochrome c in the intermembrane space (IMS) are transferred via the dinuclear copper A center (CU(A)) of subunit 2 and heme A of subunit 1 to the active site in subunit 1, a binuclear center (BNC) formed by heme A3 and copper B (CU(B)). The BNC reduces molecular oxygen to 2 water molecules using 4 electrons from cytochrome c in the IMS and 4 protons from the mitochondrial matrix. The chain is Cytochrome c oxidase subunit 3 (mt-co3) from Carassius auratus (Goldfish).